A 652-amino-acid polypeptide reads, in one-letter code: DNA ligase (652 aa).

NAD(+)-binding positions include 29 to 33 (DSEYD), 78 to 79 (SL), and Glu107. Lys109 acts as the N6-AMP-lysine intermediate in catalysis. Residues Arg130, Glu164, Lys278, and Lys302 each contribute to the NAD(+) site. Residues Cys395, Cys398, Cys413, and Cys418 each coordinate Zn(2+). Residues 577 to 652 (VADAALSGLT…VRDEAWLESL (76 aa)) form the BRCT domain.

The protein belongs to the NAD-dependent DNA ligase family. LigA subfamily. The cofactor is Mg(2+). Mn(2+) serves as cofactor.

The enzyme catalyses NAD(+) + (deoxyribonucleotide)n-3'-hydroxyl + 5'-phospho-(deoxyribonucleotide)m = (deoxyribonucleotide)n+m + AMP + beta-nicotinamide D-nucleotide.. DNA ligase that catalyzes the formation of phosphodiester linkages between 5'-phosphoryl and 3'-hydroxyl groups in double-stranded DNA using NAD as a coenzyme and as the energy source for the reaction. It is essential for DNA replication and repair of damaged DNA. The protein is DNA ligase of Streptococcus pneumoniae (strain P1031).